The following is a 183-amino-acid chain: Capsid protein (183 aa).

The interval N136–C183 is disordered. Positions V149 to S176 are enriched in basic residues. Residues S155, S162, and S170 each carry the phosphoserine; by host modification. The stretch at S155 to P161 is one 1; half-length repeat. A 3 X 8 AA repeats of S-P-R-R-R-[PR]-S-Q region spans residues S155–Q177. The short motif at R158 to R175 is the Bipartite nuclear localization signal element. Tandem repeats lie at residues S162–Q169 and S170–Q177. Residues Q177–C183 are RNA binding.

This sequence belongs to the orthohepadnavirus core antigen family. As to quaternary structure, homodimerizes, then multimerizes. Interacts with cytosol exposed regions of viral L glycoprotein present in the reticulum-to-Golgi compartment. Interacts with human FLNB. Phosphorylated form interacts with host importin alpha; this interaction depends on the exposure of the NLS, which itself depends upon genome maturation and/or phosphorylation of the capsid protein. Interacts with host NUP153. Post-translationally, phosphorylated by host SRPK1, SRPK2, and maybe protein kinase C or GAPDH. Phosphorylation is critical for pregenomic RNA packaging. Protein kinase C phosphorylation is stimulated by HBx protein and may play a role in transport of the viral genome to the nucleus at the late step during the viral replication cycle.

It localises to the virion. The protein resides in the host cytoplasm. Functionally, self assembles to form an icosahedral capsid. Most capsids appear to be large particles with an icosahedral symmetry of T=4 and consist of 240 copies of capsid protein, though a fraction forms smaller T=3 particles consisting of 180 capsid proteins. Entering capsids are transported along microtubules to the nucleus. Phosphorylation of the capsid is thought to induce exposure of nuclear localization signal in the C-terminal portion of the capsid protein that allows binding to the nuclear pore complex via the importin (karyopherin-) alpha and beta. Capsids are imported in intact form through the nuclear pore into the nuclear basket, where it probably binds NUP153. Only capsids that contain the mature viral genome can release the viral DNA and capsid protein into the nucleoplasm. Immature capsids get stuck in the basket. Capsids encapsulate the pre-genomic RNA and the P protein. Pre-genomic RNA is reverse-transcribed into DNA while the capsid is still in the cytoplasm. The capsid can then either be directed to the nucleus, providing more genomes for transcription, or bud through the endoplasmic reticulum to provide new virions. In Hepatitis B virus genotype D subtype ayw (isolate France/Tiollais/1979) (HBV-D), this protein is Capsid protein.